We begin with the raw amino-acid sequence, 102 residues long: Citrate lyase acyl carrier protein (102 aa).

Serine 14 is subject to O-(phosphoribosyl dephospho-coenzyme A)serine.

This sequence belongs to the CitD family. In terms of assembly, oligomer with a subunit composition of (alpha,beta,gamma)6.

It is found in the cytoplasm. In terms of biological role, covalent carrier of the coenzyme of citrate lyase. This Streptococcus pyogenes serotype M18 (strain MGAS8232) protein is Citrate lyase acyl carrier protein.